The following is a 464-amino-acid chain: MKNTVLIKKIYRETDQFLSKEVMISGWIRTLRASNAFGFIEINDGSFFKNIQVVFDDKLGNFKEISKLPISSSISVVGTLVATPDAKQPFEIQAKEIVIEGMSNSDYPLQKKRHTFEYLRSIAHLRPRSNAFSATFRVRSVAAFAIHKFFQEQGFVYTHTPIITGSDCEGAGEMFRVTTLDPKAPELTKEGNIDYTKDFFGKETNLTVSGQLNAECFALAFRNIYTFGPTFRAENSNTTRHAAEFWMIEPEIAFADLQDDMELAEAMLKYVIKYVMDECPEELQFFNSFVDKGLLERLNHVVSSDFAKVTYTEAVEILEKCDKEFDYDVSWGIDLQTEHERYLTEEHFKKPLFVTDYPKEIKAFYMRMNEDNKTVAATDLLVPGIGEIIGGSQREERLDVLEARMAELGLKKEDYWWYLELRKYGETKHAGFGLGFERLIMYITGMTNIRDVIPFPRTPGTSEF.

It belongs to the class-II aminoacyl-tRNA synthetase family. In terms of assembly, homodimer.

It localises to the cytoplasm. It carries out the reaction tRNA(Asn) + L-asparagine + ATP = L-asparaginyl-tRNA(Asn) + AMP + diphosphate + H(+). The chain is Asparagine--tRNA ligase from Clostridium botulinum (strain Alaska E43 / Type E3).